Reading from the N-terminus, the 74-residue chain is Kappa-scoloptoxin(07)-Ssm2d (74 aa).

A signal peptide spans 1-19 (MLVFYALLFVTVFSNTVMG). The propeptide occupies 20 to 41 (ATIDKPIPKPILREAIEEIEVN).

This sequence belongs to the scoloptoxin-07 family. Contains 3 disulfide bonds. In terms of tissue distribution, expressed by the venom gland.

It localises to the secreted. Inhibits voltage-gated potassium channels. The protein is Kappa-scoloptoxin(07)-Ssm2d of Scolopendra mutilans (Chinese red-headed centipede).